The following is a 238-amino-acid chain: Cysteine-rich venom protein pseudecin (238 aa).

The first 19 residues, 1 to 19 (MIAFIVLLSLAAVLQQSSG), serve as a signal peptide directing secretion. Residues 20–28 (TVDFASESS) constitute a propeptide that is removed on maturation. In terms of domain architecture, SCP spans 38-164 (VDKHNALRRS…SSKYLYVCQY (127 aa)). Zn(2+) contacts are provided by T51 and S106. Cystine bridges form between C75-C153, C92-C165, C148-C162, C184-C191, C187-C196, C200-C233, C209-C227, and C218-C231. A ShKT domain is found at 200 to 233 (CNYNNDFSNCKSLAKKSKCQTEWIKKKCPASCFC).

Expressed by the venom gland.

It is found in the secreted. Blocks olfactory (CNGA2) and retinal (CNGA1) CNG channel currents. Is really less potent that Pseudechetoxin. Does not affect neither depolarization- nor caffeine-induced contraction of smooth muscle. The polypeptide is Cysteine-rich venom protein pseudecin (Pseudechis porphyriacus (Red-bellied black snake)).